The chain runs to 277 residues: NH(3)-dependent NAD(+) synthetase (277 aa).

Residue 46 to 53 (GISGGQDS) coordinates ATP. Asp-52 lines the Mg(2+) pocket. Arg-141 provides a ligand contact to deamido-NAD(+). Thr-161 is a binding site for ATP. Glu-166 serves as a coordination point for Mg(2+). Positions 174 and 181 each coordinate deamido-NAD(+). ATP contacts are provided by Lys-190 and Thr-212. Deamido-NAD(+) is bound at residue 262-263 (HK).

It belongs to the NAD synthetase family. As to quaternary structure, homodimer.

The catalysed reaction is deamido-NAD(+) + NH4(+) + ATP = AMP + diphosphate + NAD(+) + H(+). Its pathway is cofactor biosynthesis; NAD(+) biosynthesis; NAD(+) from deamido-NAD(+) (ammonia route): step 1/1. Functionally, catalyzes the ATP-dependent amidation of deamido-NAD to form NAD. Uses ammonia as a nitrogen source. This Corynebacterium efficiens (strain DSM 44549 / YS-314 / AJ 12310 / JCM 11189 / NBRC 100395) protein is NH(3)-dependent NAD(+) synthetase.